Consider the following 141-residue polypeptide: 6,7-dimethyl-8-ribityllumazine synthase (141 aa).

Residues Phe11, 42–44, and 66–68 each bind 5-amino-6-(D-ribitylamino)uracil; these read ALE and VVI. 71-72 contacts (2S)-2-hydroxy-3-oxobutyl phosphate; that stretch reads ET. His74 acts as the Proton donor in catalysis. Asn98 is a 5-amino-6-(D-ribitylamino)uracil binding site. Residue Arg112 participates in (2S)-2-hydroxy-3-oxobutyl phosphate binding.

This sequence belongs to the DMRL synthase family.

It carries out the reaction (2S)-2-hydroxy-3-oxobutyl phosphate + 5-amino-6-(D-ribitylamino)uracil = 6,7-dimethyl-8-(1-D-ribityl)lumazine + phosphate + 2 H2O + H(+). The protein operates within cofactor biosynthesis; riboflavin biosynthesis; riboflavin from 2-hydroxy-3-oxobutyl phosphate and 5-amino-6-(D-ribitylamino)uracil: step 1/2. Its function is as follows. Catalyzes the formation of 6,7-dimethyl-8-ribityllumazine by condensation of 5-amino-6-(D-ribitylamino)uracil with 3,4-dihydroxy-2-butanone 4-phosphate. This is the penultimate step in the biosynthesis of riboflavin. This is 6,7-dimethyl-8-ribityllumazine synthase from Sphingopyxis alaskensis (strain DSM 13593 / LMG 18877 / RB2256) (Sphingomonas alaskensis).